We begin with the raw amino-acid sequence, 217 residues long: Somatotropin (217 aa).

The first 27 residues, 1-27 (MMAAGPRTSLLLAFALLCLPWTQMVGA), serve as a signal peptide directing secretion. His46 is a binding site for Zn(2+). Cys79 and Cys190 are joined by a disulfide. Ser132 carries the post-translational modification Phosphoserine. Glu199 contacts Zn(2+). A disulfide bridge connects residues Cys207 and Cys215.

The protein belongs to the somatotropin/prolactin family.

It is found in the secreted. In terms of biological role, plays an important role in growth control. Its major role in stimulating body growth is to stimulate the liver and other tissues to secrete IGF1. It stimulates both the differentiation and proliferation of myoblasts. It also stimulates amino acid uptake and protein synthesis in muscle and other tissues. The sequence is that of Somatotropin (GH1) from Giraffa camelopardalis (Giraffe).